Reading from the N-terminus, the 653-residue chain is MHWTPEHAQPLNQWPEQHLDVSSTTPSPAHKLELPPGGRQRCHYAWAHDDISALTASNLLKRYAEKYSGVLDSPYERPALGGYSDASFLNGAKGDPEPWPGPEPPYPLASLHEGLPGTKSGGGGGSGALGGSPVLAGNLPEPLYAGNACGGPSAAPEYAAGYGGGYLAPGYCAQTGAALPPPPPAALLQPPPPPGYGPSAPLYNYPAGGYAAQPGYGALPPPPGPPPAPYLTPGLPAPTPLPAPAPPTAYGFPTAAPGAESGLSLKRKAADEGPEGRYRKYAYEPAKAPVADGASYPAADNGECRGNGFRAKPPGAAEEASGKYGGGVPLKVLGSPVYGPQLEPFEKFPERAPAPRGGFAVPSGETPKGVDPGALELVTSKMVDCGPPVQWADVAGQGALKAALEEELVWPLLRPPAYPGSLRPPRTVLLFGPRGAGKALLGRCLATQLGATLLRLRGATLAAPGAAEGARLLQAAFAAARCRPPSVLLISELEALLPARDDGAAAGGALQVPLLACLDGGCGAGADGVLVVGTTSRPAALDEATRRRFSLRFYVALPDSPARGQILQRALAQQGCALSERELAALVQGTQGFSGGELGQLCQQAAAGAGLPGLQRPLSYKDLEAALAKVGPRASAKELDSFVEWDKMYGSGH.

Disordered regions lie at residues 1–36, 86–129, and 216–240; these read MHWT…ELPP, ASFL…SGAL, and YGAL…APTP. A compositionally biased stretch (polar residues) spans 10-27; that stretch reads PLNQWPEQHLDVSSTTPS. Residues 97–107 show a composition bias toward pro residues; the sequence is EPWPGPEPPYP. Gly residues predominate over residues 119 to 129; that stretch reads KSGGGGGSGAL. Positions 219-240 are enriched in pro residues; that stretch reads LPPPPGPPPAPYLTPGLPAPTP. ATP is bound by residues Ala395 and 435–440; that span reads GAGKAL.

The protein belongs to the AAA ATPase family. It depends on Mg(2+) as a cofactor.

It is found in the cytoplasm. The protein resides in the cell cortex. It carries out the reaction ATP + H2O = ADP + phosphate + H(+). In terms of biological role, microtubule-severing enzyme that negatively regulates cell migration and wound healing. In migrating cells, targets dynamic microtubules (MTs) at the leading edge and severs them, thereby suppressing motility. Microtubule severing releases ARHGEF2 which activates RHOA, which in turn regulates focal ahesion turnover via focal adhesion kinase, as opposed to F-actin polymerization, to suppress cell motility. Negative regulator of axon regeneration that suppresses axonal growth by selectively severing dynamic MTs in the distal axon shaft and growth cone. Contributes to proper cell branching during endothelial and neuronal development. The sequence is that of Fidgetin-like protein 2 from Homo sapiens (Human).